Consider the following 508-residue polypeptide: Cyclin-A1-1 (508 aa).

The segment covering 1 to 28 (MSSNLAASRRSSSSSSVAAAAAAKRPAV) has biased composition (low complexity). Disordered stretches follow at residues 1 to 40 (MSSN…GKAA) and 82 to 125 (VKKG…ESVL). The segment covering 29–39 (GEGGGGGGGKA) has biased composition (gly residues). Over residues 98 to 111 (ASAVKSASAKPAPA) the composition is skewed to low complexity.

This sequence belongs to the cyclin family. Cyclin AB subfamily. In terms of tissue distribution, expressed in the dividing region of the root cap and root apex. Expressed in the intercalary meristem of internodes and in adventitious roots under submergence conditions.

Functionally, involved in the control of the cell cycle at the G2/M (mitosis) transition. This is Cyclin-A1-1 (CYCA1-1) from Oryza sativa subsp. japonica (Rice).